Consider the following 142-residue polypeptide: Large ribosomal subunit protein uL13 (142 aa).

This sequence belongs to the universal ribosomal protein uL13 family. Part of the 50S ribosomal subunit.

This protein is one of the early assembly proteins of the 50S ribosomal subunit, although it is not seen to bind rRNA by itself. It is important during the early stages of 50S assembly. The polypeptide is Large ribosomal subunit protein uL13 (Actinobacillus pleuropneumoniae serotype 5b (strain L20)).